The primary structure comprises 245 residues: 1-(5-phosphoribosyl)-5-[(5-phosphoribosylamino)methylideneamino] imidazole-4-carboxamide isomerase (245 aa).

The active-site Proton acceptor is Asp-7. Catalysis depends on Asp-129, which acts as the Proton donor.

Belongs to the HisA/HisF family.

It localises to the cytoplasm. The enzyme catalyses 1-(5-phospho-beta-D-ribosyl)-5-[(5-phospho-beta-D-ribosylamino)methylideneamino]imidazole-4-carboxamide = 5-[(5-phospho-1-deoxy-D-ribulos-1-ylimino)methylamino]-1-(5-phospho-beta-D-ribosyl)imidazole-4-carboxamide. The protein operates within amino-acid biosynthesis; L-histidine biosynthesis; L-histidine from 5-phospho-alpha-D-ribose 1-diphosphate: step 4/9. In Aliivibrio salmonicida (strain LFI1238) (Vibrio salmonicida (strain LFI1238)), this protein is 1-(5-phosphoribosyl)-5-[(5-phosphoribosylamino)methylideneamino] imidazole-4-carboxamide isomerase.